Reading from the N-terminus, the 256-residue chain is MIDVQSQKDLRGIAIQKVGIKDLNWPIVVMDRANKTQTTIAKITAAAELKGDMRGTHMSRFIEAIDELNVVGPKEIERLLDRIKEKLDSQKAYVRFDFPYFINKRTPVTETLAPLKVDCYFEAEKGEKFDLKVGVIVPVHTLCPCSKEISEYGAHNQRAYVTIEVKMRRFMWIEELVEIAESSASCPLYSILKRPDEKWVTERAYQNPRFVEDLLREVVVKISGDKRIKWYKVFVESIESIHNHNAFAYIEGENTK.

This sequence belongs to the GTP cyclohydrolase IV family.

The enzyme catalyses GTP + H2O = 7,8-dihydroneopterin 3'-triphosphate + formate + H(+). The protein operates within cofactor biosynthesis; 7,8-dihydroneopterin triphosphate biosynthesis; 7,8-dihydroneopterin triphosphate from GTP: step 1/1. Its function is as follows. Converts GTP to 7,8-dihydroneopterin triphosphate. This is GTP cyclohydrolase FolE2 from Caldicellulosiruptor saccharolyticus (strain ATCC 43494 / DSM 8903 / Tp8T 6331).